The sequence spans 2051 residues: Fatty acid synthase subunit beta (2051 aa).

N-acetylmethionine is present on Met-1. Positions 1–468 (MDAYSTRPLT…VYDTFDGSDL (468 aa)) are acetyltransferase. The For acetyltransferase activity role is filled by Ser-274. The segment at 480-868 (VDCIIRLPVK…TRGVMLWKEF (389 aa)) is enoyl reductase. At Thr-733 the chain carries Phosphothreonine. Residue Ser-1121 is modified to Phosphoserine. The segment at 1144 to 1626 (GSEINWRHAS…LPNTALKTSI (483 aa)) is dehydratase. Lys-1364 participates in a covalent cross-link: Glycyl lysine isopeptide (Lys-Gly) (interchain with G-Cter in ubiquitin). The MaoC-like domain occupies 1523–1648 (NGSTLEQKVN…KFETRNEDDV (126 aa)). The tract at residues 1627–1845 (QHVGMINGRK…MTMQVAVPRD (219 aa)) is malonyl/palmitoyl transferase. Catalysis depends on Ser-1808, which acts as the For malonyltransferase activity.

This sequence belongs to the fungal fatty acid synthetase subunit beta family. [Alpha(6)beta(6)] hexamers of two multifunctional subunits (alpha and beta).

It catalyses the reaction acetyl-CoA + n malonyl-CoA + 2n NADPH + 4n H(+) = a long-chain-acyl-CoA + n CoA + n CO2 + 2n NADP(+).. The enzyme catalyses holo-[ACP] + acetyl-CoA = acetyl-[ACP] + CoA. The catalysed reaction is holo-[ACP] + malonyl-CoA = malonyl-[ACP] + CoA. It carries out the reaction a (3R)-hydroxyacyl-[ACP] = a (2E)-enoyl-[ACP] + H2O. It catalyses the reaction a 2,3-saturated acyl-[ACP] + NAD(+) = a (2E)-enoyl-[ACP] + NADH + H(+). The enzyme catalyses (9Z)-octadecenoyl-[ACP] + H2O = (9Z)-octadecenoate + holo-[ACP] + H(+). Fatty acid synthetase catalyzes the formation of long-chain fatty acids from acetyl-CoA, malonyl-CoA and NADPH. The beta subunit contains domains for: [acyl-carrier-protein] acetyltransferase and malonyltransferase, S-acyl fatty acid synthase thioesterase, enoyl-[acyl-carrier-protein] reductase, and 3-hydroxypalmitoyl-[acyl-carrier-protein] dehydratase. The chain is Fatty acid synthase subunit beta (FAS1) from Saccharomyces cerevisiae (strain ATCC 204508 / S288c) (Baker's yeast).